Consider the following 719-residue polypeptide: T-cell immunomodulatory protein homolog (719 aa).

The signal sequence occupies residues 1 to 32 (MYNFLSCKKKSIILQVLLIICTYNILLNFVNI). At 33–677 (FVNNNEKNHK…LSVNPSKKFY (645 aa)) the chain is on the extracellular side. Asn-144, Asn-277, Asn-410, Asn-540, and Asn-659 each carry an N-linked (GlcNAc...) asparagine glycan. A helical transmembrane segment spans residues 678 to 697 (SILYITLICLSVIGVLIFIL). At 698 to 719 (DRKEKVEDSKEELGFKSHFVIG) the chain is on the cytoplasmic side.

The protein belongs to the TIP family.

It is found in the membrane. In terms of biological role, may protect the parasite against attack by the host immune system by immunomodulation. The chain is T-cell immunomodulatory protein homolog from Plasmodium falciparum (isolate 3D7).